The following is a 386-amino-acid chain: MESPNKMLRVRTQHPIISIVNGVLVDLPAPSNISYYWNFGSLLGLCLVIQLITGIFLAMHYCPDVSLAFDSISHILRDVNHGFMLKYIHANGASLFFLCVYIHMGRGLYYGSYMKMDVWNIGVIIYLVMMLTAFLGYVLPWGQMSFWGATVITNFCSAIPYVGTDVVQWIWGGFSVSNATLNRFFSLHYLFPFLIAGLGVLHILSLHTAGSNNPLGIDSNIDKVTFHVYYTYKDLFGIMVLSSILVILCYFMPNVLGDPENFIQANPLVTPVHIQPEWYFLFAYAILRSIPNKLGGVLAMVFSILVLLLLPFIHTSKLRALTFRPLGKIAFWFLVADFILLTWLGANPVEEPYIMIGQFASLFYFCYFLVLVPLLGWAETTLLRMK.

Helical transmembrane passes span 39 to 59 (FGSLLGLCLVIQLITGIFLAM), 83 to 104 (FMLKYIHANGASLFFLCVYIHM), 119 to 139 (WNIGVIIYLVMMLTAFLGYVL), and 184 to 204 (FFSLHYLFPFLIAGLGVLHIL). Heme b is bound by residues His89 and His103. His188 and His202 together coordinate heme b. His207 contributes to the a ubiquinone binding site. The next 4 membrane-spanning stretches (helical) occupy residues 232–252 (YKDLFGIMVLSSILVILCYFM), 294–314 (LGGVLAMVFSILVLLLLPFIH), 326–346 (LGKIAFWFLVADFILLTWLGA), and 353–374 (YIMIGQFASLFYFCYFLVLVPL).

This sequence belongs to the cytochrome b family. As to quaternary structure, the main subunits of complex b-c1 are: cytochrome b, cytochrome c1 and the Rieske protein. The cofactor is heme b.

Its subcellular location is the mitochondrion inner membrane. Component of the ubiquinol-cytochrome c reductase complex (complex III or cytochrome b-c1 complex) that is part of the mitochondrial respiratory chain. The b-c1 complex mediates electron transfer from ubiquinol to cytochrome c. Contributes to the generation of a proton gradient across the mitochondrial membrane that is then used for ATP synthesis. The protein is Cytochrome b (MT-CYB) of Sarcophyton glaucum (Toadstool umbrella leather coral).